Here is a 354-residue protein sequence, read N- to C-terminus: Kelch domain-containing protein 8B (354 aa).

8 Kelch repeats span residues 1 to 31 (MAAGGGRAFAWQVFPPMPTCRVYGTVAHQDG), 32 to 79 (HLLV…VLGK), 81 to 127 (VLVV…ERDG), 128 to 175 (MVYA…LHGN), 176 to 222 (KIYV…MAEG), 224 to 281 (VFSL…SLGG), 282 to 329 (NIVA…QAGP), and 331 to 354 (LFVIGGVAQGPSQAVEALCLRDGV).

The protein localises to the cytoplasm. It is found in the midbody. Its function is as follows. Involved in pinching off the separated nuclei at the cleavage furrow and in cytokinesis. Required for mitotic integrity and maintenance of chromosomal stability. Protects cells against mitotic errors, centrosomal amplification, micronucleus formation and aneuploidy. Plays a key role of midbody function involving abscission of the daughter cells during cytokinesis and appropriate chromosomal and nuclear segregation into the daughter cells. This chain is Kelch domain-containing protein 8B (Klhdc8b), found in Mus musculus (Mouse).